The chain runs to 310 residues: Apolipoprotein E (310 aa).

An N-terminal signal peptide occupies residues 1 to 18 (MKVLWAALVVTLLAGCGA). 8 repeat units span residues 77–98 (ALMDDTMKEVKACQSELEEQLG), 99–120 (PVTEETKARVSKELQAAQARLG), 121–142 (ADMEEVRSRLAQYRGELQAMVG), 143–164 (QSTEELRGRLSAHLRKMRKRLL), 165–186 (RDAEDLQRRLAVYQAGIWEGAE), 187–208 (RSVNTLREHLGPLAEQAATVHT), 209–226 (LVSKPLQERAEAWAQRLR), and 227–248 (GRLEKAGFPVGDRLDEVREQVQ). The interval 77–248 (ALMDDTMKEV…RLDEVREQVQ (172 aa)) is 8 X 22 AA approximate tandem repeats. Residues 155-165 (HLRKMRKRLLR) are LDL and other lipoprotein receptors binding. 159-162 (MRKR) contacts heparin. The interval 207–283 (HTLVSKPLQE…SWFEPLVQDM (77 aa)) is lipid-binding and lipoprotein association. 222–229 (AQRLRGRL) lines the heparin pocket. The interval 259–310 (NQVRLQAEAFQGRLKSWFEPLVQDMQQKWAELVEKVQLAVGAVPTSVPSEKQ) is homooligomerization. The segment at 271–283 (RLKSWFEPLVQDM) is specificity for association with VLDL.

This sequence belongs to the apolipoprotein A1/A4/E family. As to quaternary structure, homotetramer. May interact with ABCA1; functionally associated with ABCA1 in the biogenesis of HDLs. May interact with APP/A4 amyloid-beta peptide; the interaction is extremely stable in vitro but its physiological significance is unclear. May interact with MAPT. May interact with MAP2. In the cerebrospinal fluid, interacts with secreted SORL1. Interacts with PMEL; this allows the loading of PMEL luminal fragment on ILVs to induce fibril nucleation. Post-translationally, APOE exists as multiple glycosylated and sialylated glycoforms within cells and in plasma. The extent of glycosylation and sialylation are tissue and context specific. Glycated in plasma VLDL. In terms of processing, phosphorylated by FAM20C in the extracellular medium.

The protein resides in the secreted. The protein localises to the extracellular space. Its subcellular location is the extracellular matrix. It is found in the extracellular vesicle. It localises to the endosome. The protein resides in the multivesicular body. Its function is as follows. APOE is an apolipoprotein, a protein associating with lipid particles, that mainly functions in lipoprotein-mediated lipid transport between organs via the plasma and interstitial fluids. APOE is a core component of plasma lipoproteins and is involved in their production, conversion and clearance. Apolipoproteins are amphipathic molecules that interact both with lipids of the lipoprotein particle core and the aqueous environment of the plasma. As such, APOE associates with chylomicrons, chylomicron remnants, very low density lipoproteins (VLDL) and intermediate density lipoproteins (IDL) but shows a preferential binding to high-density lipoproteins (HDL). It also binds a wide range of cellular receptors including the LDL receptor/LDLR and the very low-density lipoprotein receptor/VLDLR that mediate the cellular uptake of the APOE-containing lipoprotein particles. Finally, APOE also has a heparin-binding activity and binds heparan-sulfate proteoglycans on the surface of cells, a property that supports the capture and the receptor-mediated uptake of APOE-containing lipoproteins by cells. The protein is Apolipoprotein E (APOE) of Ceratotherium simum cottoni (Northern white rhinoceros).